The primary structure comprises 152 residues: MKTPIELKILDSRIGSEFPLPAYATPGSAGMDLRAMIDTTMTIAPGETQLVPTGIAIHVADPGLAALILPRSGLGHKHGIVLGNLVGLVDSDYQGPLMVSCWNRSDTPFTLEIGDRLAQLVFVPVVQAQFKLVDEFDSSDRGEGGFGHSGTK.

Residues 71–73 (RSG), asparagine 84, 88–90 (LVD), and methionine 98 contribute to the substrate site.

The protein belongs to the dUTPase family. Mg(2+) is required as a cofactor.

The catalysed reaction is dUTP + H2O = dUMP + diphosphate + H(+). The protein operates within pyrimidine metabolism; dUMP biosynthesis; dUMP from dCTP (dUTP route): step 2/2. This enzyme is involved in nucleotide metabolism: it produces dUMP, the immediate precursor of thymidine nucleotides and it decreases the intracellular concentration of dUTP so that uracil cannot be incorporated into DNA. In Shewanella oneidensis (strain ATCC 700550 / JCM 31522 / CIP 106686 / LMG 19005 / NCIMB 14063 / MR-1), this protein is Deoxyuridine 5'-triphosphate nucleotidohydrolase.